Reading from the N-terminus, the 177-residue chain is RNA pyrophosphohydrolase (177 aa).

The Nudix hydrolase domain maps to 6-149; that stretch reads GYRPNVGIVI…KRDVYRRVMK (144 aa). The Nudix box motif lies at 38 to 59; sequence GGINPGESPEQAMYRELFEEVG.

This sequence belongs to the Nudix hydrolase family. RppH subfamily. The cofactor is a divalent metal cation.

In terms of biological role, accelerates the degradation of transcripts by removing pyrophosphate from the 5'-end of triphosphorylated RNA, leading to a more labile monophosphorylated state that can stimulate subsequent ribonuclease cleavage. The protein is RNA pyrophosphohydrolase of Pectobacterium atrosepticum (strain SCRI 1043 / ATCC BAA-672) (Erwinia carotovora subsp. atroseptica).